The primary structure comprises 446 residues: Phosphoglucosamine mutase (446 aa).

Catalysis depends on Ser-102, which acts as the Phosphoserine intermediate. Mg(2+) is bound by residues Ser-102, Asp-241, Asp-243, and Asp-245. Phosphoserine is present on Ser-102.

Belongs to the phosphohexose mutase family. The cofactor is Mg(2+). Activated by phosphorylation.

It catalyses the reaction alpha-D-glucosamine 1-phosphate = D-glucosamine 6-phosphate. Functionally, catalyzes the conversion of glucosamine-6-phosphate to glucosamine-1-phosphate. This Xylella fastidiosa (strain M23) protein is Phosphoglucosamine mutase.